The following is a 109-amino-acid chain: U-scoloptoxin(16)-Cw1a (109 aa).

A signal peptide spans Met-1–Ala-21.

Belongs to the scoloptoxin-16 family. Post-translationally, contains 4 disulfide bonds. In terms of tissue distribution, expressed by the venom gland.

It localises to the secreted. The protein is U-scoloptoxin(16)-Cw1a of Cormocephalus westwoodi (Westwood's green centipede).